Reading from the N-terminus, the 185-residue chain is Glycerol-3-phosphate acyltransferase 4 (185 aa).

6 consecutive transmembrane segments (helical) span residues 1 to 21 (MPLL…AYLA), 47 to 67 (LGRG…SLAI), 69 to 89 (LALA…AAVL), 113 to 133 (LLIA…VLLF), 137 to 157 (VIAA…LYGL), and 158 to 178 (PGGV…THFI).

The protein belongs to the PlsY family. As to quaternary structure, probably interacts with PlsX.

Its subcellular location is the cell membrane. The catalysed reaction is an acyl phosphate + sn-glycerol 3-phosphate = a 1-acyl-sn-glycero-3-phosphate + phosphate. The protein operates within lipid metabolism; phospholipid metabolism. Catalyzes the transfer of an acyl group from acyl-phosphate (acyl-PO(4)) to glycerol-3-phosphate (G3P) to form lysophosphatidic acid (LPA). This enzyme utilizes acyl-phosphate as fatty acyl donor, but not acyl-CoA or acyl-ACP. The sequence is that of Glycerol-3-phosphate acyltransferase 4 from Dehalococcoides mccartyi (strain ATCC BAA-2266 / KCTC 15142 / 195) (Dehalococcoides ethenogenes (strain 195)).